Here is a 164-residue protein sequence, read N- to C-terminus: Diphosphoinositol polyphosphate phosphohydrolase 3-beta (164 aa).

Residues R9, 17-19, and 38-40 each bind substrate; these read KKR and SSR. The Nudix hydrolase domain occupies 17 to 144; sequence KKRAACLCFR…VHAEYLQKLK (128 aa). G49 and E65 together coordinate Mg(2+). Positions 50 to 71 match the Nudix box motif; sequence GGMEPEEEPGGAAVREVFEEAG. E68 serves as the catalytic Proton acceptor. E69 lines the Mg(2+) pocket. Substrate contacts are provided by residues 89–91, R115, and K133; that span reads RKH. The tract at residues 144–164 is disordered; that stretch reads KLGGSPTNGNSVAPSPPEGDP.

This sequence belongs to the Nudix hydrolase family. DIPP subfamily. Requires Mg(2+) as cofactor. Mn(2+) serves as cofactor.

The protein localises to the cytoplasm. It catalyses the reaction diphospho-myo-inositol polyphosphate + H2O = myo-inositol polyphosphate + phosphate.. The enzyme catalyses P(1),P(6)-bis(5'-adenosyl) hexaphosphate + H2O = adenosine 5'-pentaphosphate + AMP + 2 H(+). The catalysed reaction is P(1),P(5)-bis(5'-adenosyl) pentaphosphate + H2O = adenosine 5'-tetraphosphate + AMP + 2 H(+). In terms of biological role, cleaves a beta-phosphate from the diphosphate groups in PP-InsP5 (diphosphoinositol pentakisphosphate), suggesting that it may play a role in signal transduction. Also able to catalyze the hydrolysis of dinucleoside oligophosphates, with Ap6A and Ap5A being the preferred substrates. The major reaction products are ADP and p4a from Ap6A and ADP and ATP from Ap5A. Also able to hydrolyze 5-phosphoribose 1-diphosphate. This Bos taurus (Bovine) protein is Diphosphoinositol polyphosphate phosphohydrolase 3-beta.